Here is a 256-residue protein sequence, read N- to C-terminus: MSNFDNFNTDFYQTSYSIDDQSQGYNYNAGGAQYSKQYPYDPYSQQGGFILQEMNQQQQPYTGQIYQPTQTYTPTATESVYGSTFDDEPPLLEELGINFDHIWQKTLTVLHPLKVADGSIMNETDLAGPMVFCLAFGATLLLAGKIQFGYVYGISAMGCLGMYCLLNLMSMTGVSFGCVSSVLGYCLLPMIILSTFAVIFSLQGILGIVLAALIIGWCSFSASKIFISALAMDGQQLLVAYPCALLYGVFALISVF.

Over 1–125 (MSNFDNFNTD…ADGSIMNETD (125 aa)) the chain is Cytoplasmic. Residues 126–146 (LAGPMVFCLAFGATLLLAGKI) form a helical membrane-spanning segment. A topological domain (lumenal) is located at residue glutamine 147. The helical transmembrane segment at 148 to 168 (FGYVYGISAMGCLGMYCLLNL) threads the bilayer. Residues 169–172 (MSMT) are Cytoplasmic-facing. A helical transmembrane segment spans residues 173-193 (GVSFGCVSSVLGYCLLPMIIL). Over 194-195 (ST) the chain is Lumenal. A helical transmembrane segment spans residues 196–216 (FAVIFSLQGILGIVLAALIIG). Over 217–235 (WCSFSASKIFISALAMDGQ) the chain is Cytoplasmic. Residues 236–256 (QLLVAYPCALLYGVFALISVF) form a helical membrane-spanning segment.

Belongs to the YIP1 family.

The protein localises to the endoplasmic reticulum membrane. It is found in the golgi apparatus. It localises to the cis-Golgi network membrane. Its function is as follows. Plays a role in transport between endoplasmic reticulum and Golgi. This Xenopus laevis (African clawed frog) protein is Protein YIPF5 (yipf5).